A 234-amino-acid chain; its full sequence is Fibroblast growth factor-binding protein 1 (234 aa).

Positions 1 to 23 (MRTHGLTLLSLLLLAVPMLLVEA) are cleaved as a signal peptide. The interval 25-59 (KEGRNRRGSKASADESLALGKPGKEPRSQPTNYPI) is disordered. 3 cysteine pairs are disulfide-bonded: Cys71/Cys88, Cys97/Cys130, and Cys106/Cys142. A glycan (N-linked (GlcNAc...) asparagine) is linked at Asn155. A disordered region spans residues 169-200 (MEPSPMDTVEVTTSSSPEKTQTMATKDPQCEE). Ser172 carries an O-linked (GalNAc...) serine glycan. Polar residues predominate over residues 178–192 (EVTTSSSPEKTQTMA). The tract at residues 194-234 (KDPQCEEEDLKNQRKAALEYCGETWGSLCNFFLSMVQGSSC) is sufficient for interaction with FGF2 and FGF2-induced effects. 2 disulfides stabilise this stretch: Cys198/Cys234 and Cys214/Cys222.

It belongs to the fibroblast growth factor-binding protein family. Found in a complex with FGFBP1, FGF1 and FGF2. Interacts with FGF1, FGF7, FGF10, FGF22 and HSPG2. Interacts with FGF2.

It is found in the secreted. The protein localises to the extracellular space. The protein resides in the cell membrane. Acts as a carrier protein that release fibroblast-binding factors (FGFs) from the extracellular matrix (EM) storage and thus enhance the mitogenic activity of FGFs. Enhances FGF2 signaling during tissue repair, angiogenesis and in tumor growth. The chain is Fibroblast growth factor-binding protein 1 (FGFBP1) from Bos taurus (Bovine).